A 361-amino-acid chain; its full sequence is Mitochondrial import receptor subunit TOM40 homolog (361 aa).

Low complexity predominate over residues 1–10; that stretch reads MGNVLAASSP. Positions 1 to 71 are disordered; it reads MGNVLAASSP…TASASGAAED (71 aa). Over residues 11–36 the composition is skewed to pro residues; the sequence is PAGPPPPPAPALVGLPPPPPSPPGFT. Low complexity-rich tracts occupy residues 37 to 52 and 59 to 71; these read LPPL…STSR and GAAT…AAED.

It belongs to the Tom40 family. In terms of assembly, forms part of the preprotein translocase complex of the outer mitochondrial membrane (TOM complex) which consists of at least 7 different proteins (TOMM5, TOMM6, TOMM7, TOMM20, TOMM22, TOMM40 and TOMM70). Interacts with mitochondrial targeting sequences. Interacts with TIMM29; linking the TIM22 complex to the TOM complex. Forms a complex with BCAP31 (via C-terminus) which mediates the translocation of components of the mitochondrial membrane respiratory chain NADH dehydrogenase (Complex I) from the cytosol to the mitochondria. Interacts (via N-terminus) with CYP1A1 (via mitochondrial targeting signal); this interaction is required for CYP1A1 translocation across the mitochondrial outer membrane.

It localises to the mitochondrion outer membrane. In terms of biological role, channel-forming protein essential for import of protein precursors into mitochondria. Plays a role in the assembly of the mitochondrial membrane respiratory chain NADH dehydrogenase (Complex I) by forming a complex with BCAP31 and mediating the translocation of Complex I components from the cytosol to the mitochondria. This is Mitochondrial import receptor subunit TOM40 homolog (TOMM40) from Homo sapiens (Human).